A 204-amino-acid chain; its full sequence is Large ribosomal subunit protein uL18 (204 aa).

This sequence belongs to the universal ribosomal protein uL18 family. As to quaternary structure, part of the 50S ribosomal subunit. Contacts the 5S and 23S rRNAs.

In terms of biological role, this is one of the proteins that bind and probably mediate the attachment of the 5S RNA into the large ribosomal subunit, where it forms part of the central protuberance. This chain is Large ribosomal subunit protein uL18, found in Ignicoccus hospitalis (strain KIN4/I / DSM 18386 / JCM 14125).